The following is a 251-amino-acid chain: CDP-diacylglycerol pyrophosphatase (251 aa).

A helical membrane pass occupies residues 4-24; sequence AGLLFLVMIVIAVVAAGIGYW.

The protein belongs to the Cdh family.

It localises to the cell inner membrane. The enzyme catalyses a CDP-1,2-diacyl-sn-glycerol + H2O = a 1,2-diacyl-sn-glycero-3-phosphate + CMP + 2 H(+). It participates in phospholipid metabolism; CDP-diacylglycerol degradation; phosphatidate from CDP-diacylglycerol: step 1/1. In Escherichia coli O81 (strain ED1a), this protein is CDP-diacylglycerol pyrophosphatase.